The chain runs to 136 residues: Histone H3-7 (136 aa).

Positions 1–43 are disordered; the sequence is MARTKQTARKSTGGKAPRKQLATKAARKSAPATGGVKKPHRYR. R3 carries the asymmetric dimethylarginine modification. R3 carries the post-translational modification Citrulline; alternate. A Phosphothreonine modification is found at T4. Position 5 is an allysine; alternate (K5). K5 is subject to N6,N6,N6-trimethyllysine; alternate. At K5 the chain carries N6,N6-dimethyllysine; alternate. Residue K5 is modified to N6-(2-hydroxyisobutyryl)lysine; alternate. K5 is modified (N6-(beta-hydroxybutyryl)lysine; alternate). K5 is modified (N6-acetyllysine; alternate). Position 5 is an N6-methyllysine; alternate (K5). Q6 is modified (5-glutamyl dopamine; alternate). 5-glutamyl serotonin; alternate is present on Q6. The residue at position 7 (T7) is a Phosphothreonine. R9 is subject to Citrulline; alternate. At R9 the chain carries Symmetric dimethylarginine. K10 is modified (N6,N6,N6-trimethyllysine; alternate). Position 10 is an N6,N6-dimethyllysine; alternate (K10). K10 carries the post-translational modification N6-(2-hydroxyisobutyryl)lysine; alternate. Residue K10 is modified to N6-(beta-hydroxybutyryl)lysine; alternate. K10 carries the N6-acetyllysine; alternate modification. At K10 the chain carries N6-methyllysine; alternate. K10 is modified (N6-lactoyllysine; alternate). An ADP-ribosylserine; alternate modification is found at S11. Residue S11 is modified to Phosphoserine; alternate. T12 bears the Phosphothreonine mark. K15 carries the post-translational modification N6-(2-hydroxyisobutyryl)lysine; alternate. K15 is subject to N6-(beta-hydroxybutyryl)lysine; alternate. Position 15 is an N6-acetyllysine; alternate (K15). K15 carries the post-translational modification N6-lactoyllysine; alternate. K15 bears the N6-glutaryllysine; alternate mark. Residue K15 is modified to N6-succinyllysine; alternate. Position 18 is an asymmetric dimethylarginine (R18). A Citrulline; alternate modification is found at R18. N6-(2-hydroxyisobutyryl)lysine; alternate is present on residues K19 and K24. Residues K19 and K24 each carry the N6-(beta-hydroxybutyryl)lysine; alternate modification. N6-acetyllysine; alternate occurs at positions 19 and 24. N6-methyllysine; alternate is present on residues K19 and K24. An N6-lactoyllysine; alternate mark is found at K19 and K24. An N6-glutaryllysine; alternate mark is found at K19 and K24. N6-butyryllysine; alternate is present on residues K19 and K24. The residue at position 27 (R27) is a Citrulline. K28 bears the N6,N6,N6-trimethyllysine; alternate mark. N6,N6-dimethyllysine; alternate is present on K28. N6-(2-hydroxyisobutyryl)lysine; alternate is present on K28. Position 28 is an N6-acetyllysine; alternate (K28). K28 is subject to N6-methyllysine; alternate. K28 carries the post-translational modification N6-lactoyllysine; alternate. K28 is modified (N6-glutaryllysine; alternate). ADP-ribosylserine; alternate is present on S29. Position 29 is a phosphoserine; alternate (S29). At K37 the chain carries N6,N6,N6-trimethyllysine; alternate. An N6,N6-dimethyllysine; alternate modification is found at K37. K37 carries the post-translational modification N6-(2-hydroxyisobutyryl)lysine; alternate. At K37 the chain carries N6-acetyllysine; alternate. Position 37 is an N6-methyllysine; alternate (K37). At K38 the chain carries N6-methyllysine. Phosphotyrosine is present on Y42. K57 bears the N6,N6,N6-trimethyllysine; alternate mark. At K57 the chain carries N6-(2-hydroxyisobutyryl)lysine; alternate. K57 bears the N6-(beta-hydroxybutyryl)lysine; alternate mark. At K57 the chain carries N6-acetyllysine; alternate. K57 bears the N6-lactoyllysine; alternate mark. An N6-glutaryllysine; alternate modification is found at K57. K57 bears the N6-succinyllysine; alternate mark. Position 57 is an N6-methyllysine (K57). Phosphoserine is present on S58. 2 positions are modified to N6-(2-hydroxyisobutyryl)lysine; alternate: K65 and K80. N6-methyllysine; alternate is present on residues K65 and K80. An N6,N6,N6-trimethyllysine; alternate modification is found at K80. K80 carries the post-translational modification N6,N6-dimethyllysine; alternate. At K80 the chain carries N6-acetyllysine; alternate. At K80 the chain carries N6-lactoyllysine; alternate. Position 80 is an N6-glutaryllysine; alternate (K80). N6-succinyllysine; alternate is present on K80. T81 bears the Phosphothreonine mark. At S87 the chain carries Phosphoserine. Residue T108 is modified to Phosphothreonine. K116 and K123 each carry N6-acetyllysine; alternate. An N6-glutaryllysine; alternate mark is found at K116 and K123. Residue K123 is modified to N6-(2-hydroxyisobutyryl)lysine; alternate. K123 bears the N6-methyllysine; alternate mark. K123 is subject to N6-succinyllysine; alternate.

It belongs to the histone H3 family. In terms of assembly, the nucleosome is a histone octamer containing two molecules each of H2A, H2B, H3 and H4 assembled in one H3-H4 heterotetramer and two H2A-H2B heterodimers. The octamer wraps approximately 147 bp of DNA. During nucleosome assembly the chaperone ASF1A interacts with the histone H3-H4 heterodimer. Acetylation is generally linked to gene activation. Acetylation on Lys-10 (H3K9ac) impairs methylation at Arg-9 (H3R8me2s). Acetylation on Lys-19 (H3K18ac) and Lys-24 (H3K24ac) favors methylation at Arg-18 (H3R17me). Acetylation at Lys-123 (H3K122ac) by EP300/p300 plays a central role in chromatin structure: localizes at the surface of the histone octamer and stimulates transcription, possibly by promoting nucleosome instability. In terms of processing, citrullination at Arg-9 (H3R8ci) and/or Arg-18 (H3R17ci) by PADI4 impairs methylation and represses transcription. Post-translationally, asymmetric dimethylation at Arg-18 (H3R17me2a) by CARM1 is linked to gene activation. Symmetric dimethylation at Arg-9 (H3R8me2s) by PRMT5 is linked to gene repression. Asymmetric dimethylation at Arg-3 (H3R2me2a) by PRMT6 is linked to gene repression and is mutually exclusive with H3 Lys-5 methylation (H3K4me2 and H3K4me3). H3R2me2a is present at the 3' of genes regardless of their transcription state and is enriched on inactive promoters, while it is absent on active promoters. Methylation at Lys-5 (H3K4me), Lys-37 (H3K36me) and Lys-80 (H3K79me) are linked to gene activation. Methylation at Lys-5 (H3K4me) facilitates subsequent acetylation of H3 and H4. Methylation at Lys-80 (H3K79me) is associated with DNA double-strand break (DSB) responses and is a specific target for TP53BP1. Methylation at Lys-10 (H3K9me) and Lys-28 (H3K27me) are linked to gene repression. Methylation at Lys-10 (H3K9me) is a specific target for HP1 proteins (CBX1, CBX3 and CBX5) and prevents subsequent phosphorylation at Ser-11 (H3S10ph) and acetylation of H3 and H4. Methylation at Lys-5 (H3K4me) and Lys-80 (H3K79me) require preliminary monoubiquitination of H2B at 'Lys-120'. Methylation at Lys-10 (H3K9me) and Lys-28 (H3K27me) are enriched in inactive X chromosome chromatin. Monomethylation at Lys-57 (H3K56me1) by EHMT2/G9A in G1 phase promotes interaction with PCNA and is required for DNA replication. In terms of processing, phosphorylated at Thr-4 (H3T3ph) by HASPIN during prophase and dephosphorylated during anaphase. Phosphorylation at Ser-11 (H3S10ph) by AURKB is crucial for chromosome condensation and cell-cycle progression during mitosis and meiosis. In addition phosphorylation at Ser-11 (H3S10ph) by RPS6KA4 and RPS6KA5 is important during interphase because it enables the transcription of genes following external stimulation, like mitogens, stress, growth factors or UV irradiation and result in the activation of genes, such as c-fos and c-jun. Phosphorylation at Ser-11 (H3S10ph), which is linked to gene activation, prevents methylation at Lys-10 (H3K9me) but facilitates acetylation of H3 and H4. Phosphorylation at Ser-11 (H3S10ph) by AURKB mediates the dissociation of HP1 proteins (CBX1, CBX3 and CBX5) from heterochromatin. Phosphorylation at Ser-11 (H3S10ph) is also an essential regulatory mechanism for neoplastic cell transformation. Phosphorylated at Ser-29 (H3S28ph) by MAP3K20 isoform 1, RPS6KA5 or AURKB during mitosis or upon ultraviolet B irradiation. Phosphorylation at Thr-7 (H3T6ph) by PRKCB is a specific tag for epigenetic transcriptional activation that prevents demethylation of Lys-5 (H3K4me) by LSD1/KDM1A. At centromeres, specifically phosphorylated at Thr-12 (H3T11ph) from prophase to early anaphase, by DAPK3 and PKN1. Phosphorylation at Thr-12 (H3T11ph) by PKN1 or isoform M2 of PKM (PKM2) is a specific tag for epigenetic transcriptional activation that promotes demethylation of Lys-10 (H3K9me) by KDM4C/JMJD2C. Phosphorylation at Tyr-42 (H3Y41ph) by JAK2 promotes exclusion of CBX5 (HP1 alpha) from chromatin. Post-translationally, ubiquitinated. Lysine deamination at Lys-5 (H3K4all) to form allysine is mediated by LOXL2. Allysine formation by LOXL2 only takes place on H3K4me3 and results in gene repression. In terms of processing, butyrylation of histones marks active promoters and competes with histone acetylation. It is present during late spermatogenesis. Post-translationally, succinylation at Lys-80 (H3K79succ) by KAT2A takes place with a maximum frequency around the transcription start sites of genes. It gives a specific tag for epigenetic transcription activation. Desuccinylation at Lys-123 (H3K122succ) by SIRT7 in response to DNA damage promotes chromatin condensation and double-strand breaks (DSBs) repair. Serine ADP-ribosylation constitutes the primary form of ADP-ribosylation of proteins in response to DNA damage. Serine ADP-ribosylation at Ser-11 (H3S10ADPr) is mutually exclusive with phosphorylation at Ser-11 (H3S10ph) and impairs acetylation at Lys-10 (H3K9ac).

The protein localises to the nucleus. The protein resides in the chromosome. Its function is as follows. Core component of nucleosome. Nucleosomes wrap and compact DNA into chromatin, limiting DNA accessibility to the cellular machineries which require DNA as a template. Histones thereby play a central role in transcription regulation, DNA repair, DNA replication and chromosomal stability. DNA accessibility is regulated via a complex set of post-translational modifications of histones, also called histone code, and nucleosome remodeling. In Homo sapiens (Human), this protein is Histone H3-7.